The chain runs to 104 residues: Large ribosomal subunit protein uL24 (104 aa).

The protein belongs to the universal ribosomal protein uL24 family. Part of the 50S ribosomal subunit.

In terms of biological role, one of two assembly initiator proteins, it binds directly to the 5'-end of the 23S rRNA, where it nucleates assembly of the 50S subunit. Its function is as follows. One of the proteins that surrounds the polypeptide exit tunnel on the outside of the subunit. This chain is Large ribosomal subunit protein uL24, found in Bartonella tribocorum (strain CIP 105476 / IBS 506).